The chain runs to 360 residues: C-C chemokine receptor type 4 (360 aa).

Residues 1 to 39 (MNPTDIADTTLDESIYSNYYLYESIPKPCTKEGIKAFGE) are Extracellular-facing. The chain crosses the membrane as a helical span at residues 40–67 (LFLPPLYSLVFVFGLLGNSVVVLVLFKY). Residues 68–77 (KRLRSMTDVY) are Cytoplasmic-facing. The chain crosses the membrane as a helical span at residues 78–98 (LLNLAISDLLFVFSLPFWGYY). Topologically, residues 99–111 (AADQWVFGLGLCK) are extracellular. Cys110 and Cys187 are disulfide-bonded. The chain crosses the membrane as a helical span at residues 112 to 133 (MISWMYLVGFYSGIFFVMLMSI). The Cytoplasmic portion of the chain corresponds to 134-150 (DRYLAIVHAVFSLRART). Residues 151–175 (LTYGVITSLATWSVAVFASLPGFLF) form a helical membrane-spanning segment. Residues 176-206 (STCYTERNHTYCKTKYSLNSTTWKVLSSLEI) are Extracellular-facing. N-linked (GlcNAc...) asparagine glycans are attached at residues Asn183 and Asn194. Residues 207-226 (NILGLVIPLGIMLFCYSMII) form a helical membrane-spanning segment. Over 227–242 (RTLQHCKNEKKNKAVK) the chain is Cytoplasmic. The chain crosses the membrane as a helical span at residues 243–267 (MIFAVVVLFLGFWTPYNIVLFLETL). Residues 268 to 284 (VELEVLQDCTFERYLDY) are Extracellular-facing. The helical transmembrane segment at 285-308 (AIQATETLAFVHCCLNPIIYFFLG) threads the bilayer. Topologically, residues 309–360 (EKFRKYILQLFKTCRGLFVLCQYCGLLQIYSADTPSSSYTQSTMDHDLHDAL) are cytoplasmic.

The protein belongs to the G-protein coupled receptor 1 family. In terms of processing, in natural killer cells, CCL22 binding induces phosphorylation on yet undefined Ser/Thr residues, most probably by beta-adrenergic receptor kinases 1 and 2. In terms of tissue distribution, predominantly expressed in the thymus, in peripheral blood leukocytes, including T-cells, mostly CD4+ cells, and basophils, and in platelets; at lower levels, in the spleen and in monocytes. Detected also in macrophages, IL-2-activated natural killer cells and skin-homing memory T-cells, mostly the ones expressing the cutaneous lymphocyte antigen (CLA). Expressed in brain microvascular and coronary artery endothelial cells.

It is found in the cell membrane. In terms of biological role, high affinity receptor for the C-C type chemokines CCL17/TARC, CCL22/MDC and CKLF isoform 1/CKLF1. The activity of this receptor is mediated by G(i) proteins which activate a phosphatidylinositol-calcium second messenger system. Can function as a chemoattractant homing receptor on circulating memory lymphocytes and as a coreceptor for some primary HIV-2 isolates. In the CNS, could mediate hippocampal-neuron survival. This chain is C-C chemokine receptor type 4 (CCR4), found in Homo sapiens (Human).